The sequence spans 313 residues: Ribosomal RNA small subunit methyltransferase H (313 aa).

Residues 35–37 (GGH), D55, F80, D102, and Q109 each bind S-adenosyl-L-methionine.

Belongs to the methyltransferase superfamily. RsmH family.

It is found in the cytoplasm. It catalyses the reaction cytidine(1402) in 16S rRNA + S-adenosyl-L-methionine = N(4)-methylcytidine(1402) in 16S rRNA + S-adenosyl-L-homocysteine + H(+). Functionally, specifically methylates the N4 position of cytidine in position 1402 (C1402) of 16S rRNA. The polypeptide is Ribosomal RNA small subunit methyltransferase H (Shewanella oneidensis (strain ATCC 700550 / JCM 31522 / CIP 106686 / LMG 19005 / NCIMB 14063 / MR-1)).